The chain runs to 732 residues: Elongation factor 2 (732 aa).

Residues 19 to 260 (ERIRNIGIAA…MVVRHLPSPI (242 aa)) form the tr-type G domain. Residues 28–35 (AHIDHGKT), 94–98 (DTPGH), and 148–151 (NKVD) contribute to the GTP site. His-597 is modified (diphthamide).

This sequence belongs to the TRAFAC class translation factor GTPase superfamily. Classic translation factor GTPase family. EF-G/EF-2 subfamily.

The protein resides in the cytoplasm. Its function is as follows. Catalyzes the GTP-dependent ribosomal translocation step during translation elongation. During this step, the ribosome changes from the pre-translocational (PRE) to the post-translocational (POST) state as the newly formed A-site-bound peptidyl-tRNA and P-site-bound deacylated tRNA move to the P and E sites, respectively. Catalyzes the coordinated movement of the two tRNA molecules, the mRNA and conformational changes in the ribosome. The chain is Elongation factor 2 (fusA) from Pyrococcus furiosus (strain ATCC 43587 / DSM 3638 / JCM 8422 / Vc1).